The primary structure comprises 740 residues: Ion-translocating oxidoreductase complex subunit C (740 aa).

2 consecutive 4Fe-4S ferredoxin-type domains span residues 369-397 (GEPQEEQSCIRCSACADACPADLLPQQLY) and 407-436 (KATTHNIADCIECGACAWVCPSNIPLVQYF). Cys-377, Cys-380, Cys-383, Cys-387, Cys-416, Cys-419, Cys-422, and Cys-426 together coordinate [4Fe-4S] cluster. The interval 602 to 684 (KLEQQQANAE…EPEEQVDPRK (83 aa)) is disordered. Composition is skewed to low complexity over residues 605 to 615 (QQQANAEPEQQ) and 637 to 647 (QQQANAEPEQQ).

Belongs to the 4Fe4S bacterial-type ferredoxin family. RnfC subfamily. In terms of assembly, the complex is composed of six subunits: RsxA, RsxB, RsxC, RsxD, RsxE and RsxG. It depends on [4Fe-4S] cluster as a cofactor.

Its subcellular location is the cell inner membrane. Functionally, part of a membrane-bound complex that couples electron transfer with translocation of ions across the membrane. Required to maintain the reduced state of SoxR. The chain is Ion-translocating oxidoreductase complex subunit C from Escherichia coli O7:K1 (strain IAI39 / ExPEC).